Reading from the N-terminus, the 390-residue chain is LL-diaminopimelate aminotransferase (390 aa).

Substrate-binding residues include Y13, G38, K102, Y126, and N176. Pyridoxal 5'-phosphate contacts are provided by residues 101-102 (SK), Y126, N176, Y207, and 235-237 (SVS). Position 238 is an N6-(pyridoxal phosphate)lysine (K238). R246 lines the pyridoxal 5'-phosphate pocket. R364 is a substrate binding site.

Belongs to the class-I pyridoxal-phosphate-dependent aminotransferase family. LL-diaminopimelate aminotransferase subfamily. As to quaternary structure, homodimer. The cofactor is pyridoxal 5'-phosphate.

It catalyses the reaction (2S,6S)-2,6-diaminopimelate + 2-oxoglutarate = (S)-2,3,4,5-tetrahydrodipicolinate + L-glutamate + H2O + H(+). It participates in amino-acid biosynthesis; L-lysine biosynthesis via DAP pathway; LL-2,6-diaminopimelate from (S)-tetrahydrodipicolinate (aminotransferase route): step 1/1. In terms of biological role, involved in the synthesis of meso-diaminopimelate (m-DAP or DL-DAP), required for both lysine and peptidoglycan biosynthesis. Catalyzes the direct conversion of tetrahydrodipicolinate to LL-diaminopimelate. Is also able to catalyze the reverse reaction in vitro, i.e. the transamination of LL-diaminopimelate with 2-oxoglutarate to produce tetrahydrodipicolinate and glutamate. Can also use m-DAP instead of LL-DAP as the amino-group donor, and oxaloacetate instead of 2-oxoglutarate as the amino-group acceptor. The chain is LL-diaminopimelate aminotransferase from Moorella thermoacetica (strain ATCC 39073 / JCM 9320).